Here is a 127-residue protein sequence, read N- to C-terminus: Glycine cleavage system H protein (127 aa).

Residues Ala-24–Arg-105 form the Lipoyl-binding domain. N6-lipoyllysine is present on Lys-65.

It belongs to the GcvH family. The glycine cleavage system is composed of four proteins: P, T, L and H. It depends on (R)-lipoate as a cofactor.

The glycine cleavage system catalyzes the degradation of glycine. The H protein shuttles the methylamine group of glycine from the P protein to the T protein. This chain is Glycine cleavage system H protein, found in Chlorobium limicola (strain DSM 245 / NBRC 103803 / 6330).